We begin with the raw amino-acid sequence, 326 residues long: D-threonate 4-phosphate dehydrogenase (326 aa).

Substrate contacts are provided by histidine 138 and threonine 139. A divalent metal cation-binding residues include histidine 168, histidine 212, and histidine 267. Substrate-binding residues include lysine 275, asparagine 284, and arginine 293.

The protein belongs to the PdxA family. PdxA2 subfamily. In terms of assembly, homodimer. The cofactor is a divalent metal cation.

It catalyses the reaction 4-O-phospho-D-threonate + NAD(+) = dihydroxyacetone phosphate + CO2 + NADH. Its function is as follows. Catalyzes the NAD-dependent oxidation and subsequent decarboxylation of D-threonate 4-phosphate to produce dihydroxyacetone phosphate (DHAP). Can also use 4-hydroxy-L-threonine 4-phosphate as substrate. The sequence is that of D-threonate 4-phosphate dehydrogenase from Pectobacterium atrosepticum (strain SCRI 1043 / ATCC BAA-672) (Erwinia carotovora subsp. atroseptica).